A 329-amino-acid polypeptide reads, in one-letter code: Carbonic anhydrase (329 aa).

Residues 1-108 (MSTASAFAIN…AAARIDQITA (108 aa)) are chloroplast transit peptide-like.

This sequence belongs to the beta-class carbonic anhydrase family. In terms of assembly, homohexamer.

The protein resides in the cytoplasm. It carries out the reaction hydrogencarbonate + H(+) = CO2 + H2O. In terms of biological role, reversible hydration of carbon dioxide. This is Carbonic anhydrase from Flaveria pringlei.